Consider the following 616-residue polypeptide: MIQVLLVIICLAVFPYQGSSIILESGNVNDYEVVYLQKVTAMNKGAVKQPEQKYEDTMQYEFKVNGEPVILHLEKNKDLFSEDYSETHYSPDGREITTNPPVEDHCYYHGRIQNDADSTASISACNGLKGHFQLRGETYFIEPLKIPDSEAHAVYKYENVEKEDEAPKTCGVTQTNWESDELIKKASQLNLTPEQQRYLNSPKYIKLVIVADYIMFLKYGRSLITIRTRIYEIVNLLNVIYRVLNIYIALVGLEIWNNGDKINVLPEAKVTLDLFGKWRETDLLNRRKHDNAQLLTGINFNGPTAGLGYLGSMCNPQYSAGIVQDHNKVNFLVALAMAHEMGHNLGMDHDGIQCTCGAKSCIMSGTLSCEASIRFSNCSQEEHRKYLINKMPQCILNKPLKTDIVSPAVCGNYLVELGEDCDCGSPRDCQNPCCNAATCKLTPGSQCADGECCDQCKFGRAGTVCRPANGECDVSDVCTGQSAECPTDQFQRNGHPCQNNNGYCYNGTCPILGKQCISLFGASATVAQDACFQFNRLGNEYGYCRKENGRKIPCAPQDVKCGRLYCFDNLPEHKNPCQIYYTPRDENKGMVDPGTKCGDGMACSSNGQCVDVNTAY.

An N-terminal signal peptide occupies residues 1-20 (MIQVLLVIICLAVFPYQGSS). Positions 21–193 (IILESGNVND…KKASQLNLTP (173 aa)) are excised as a propeptide. Glu194 is subject to Pyrrolidone carboxylic acid (Glu). The 197-residue stretch at 203-399 (KYIKLVIVAD…KMPQCILNKP (197 aa)) folds into the Peptidase M12B domain. Intrachain disulfides connect Cys314–Cys394, Cys354–Cys378, and Cys356–Cys361. Residue His339 participates in Zn(2+) binding. The short motif at 339–350 (HEMGHNLGMDHD) is the Metal-binding element. Glu340 serves as the catalytic Proton acceptor. The Zn(2+) site is built by His343 and His349. Asn377 carries an N-linked (GlcNAc...) asparagine glycan. The 87-residue stretch at 407–493 (PAVCGNYLVE…ECPTDQFQRN (87 aa)) folds into the Disintegrin domain. Val409, Asn412, Glu416, Glu419, and Asp422 together coordinate Ca(2+). 14 disulfide bridges follow: Cys410–Cys439, Cys421–Cys434, Cys423–Cys429, Cys433–Cys456, Cys447–Cys453, Cys452–Cys478, Cys465–Cys485, Cys472–Cys504, Cys497–Cys509, Cys516–Cys566, Cys531–Cys577, Cys544–Cys554, Cys561–Cys603, and Cys597–Cys609. The D/ECD-tripeptide motif lies at 471-473 (ECD). 3 residues coordinate Ca(2+): Asp473, Asp476, and Asp488. An N-linked (GlcNAc...) asparagine glycan is attached at Asn506.

The protein belongs to the venom metalloproteinase (M12B) family. P-III subfamily. P-IIIc sub-subfamily. Homodimer; disulfide-linked. The cofactor is Zn(2+). In terms of processing, N-glycosylated. The N-terminus is blocked. As to expression, expressed by the venom gland (at protein level). Expressed by the venom gland.

The protein resides in the secreted. With respect to regulation, the proteolytic activity requires Zn(2+) and Ca(2+) ions. The alpha-fibrinogenase activity is completely inhibited by EDTA, but not by PMSF. Zinc metalloprotease that has fibrinogenolytic and hemorrhagic activities. Cleaves insulin B chain readily at '38-Ala-|-Leu-39' bond, and at a significantly slower rate, at '40-Tyr-|-Leu-41' bond. Hydrolyzes isolated extracellular matrix (ECM) bovine fibronectin, and basal membrane (BM) proteins human collagen IV and, to a lesser extent, murine laminin, in vitro. Cleaves murine nidogen (at '350-Ser-|-Phe-351' and '380-Tyr-|-Asn-381' bonds), but not laminin, in a solubilized BM preparation. Hydrolyzes plasma proteins involved in blood coagulation in vitro. It significantly prolongs thrombin time. Has potent alpha-fibrinogenase activity cleaving human fibrinogen alpha chain at '432-Lys-|-Leu-433' bond, but does not cleave beta or gamma chains. Hydrolyzes bovine prothrombin, but does not cleave it at '366-Arg-|-Ile-367' bond, which is necessary for the formation of active alpha-thrombin, however, the cleavage of fragment 1 from it leads to reduced alpha-thrombin formation. Hydrolyzes bovine factor X heavy chain at '211-Ser-|-Leu-212', '213-Asp-|-Leu-214' and '216-Gly-|-Leu-217' bonds activating it only marginally as does not cleave at the physiological activation site. Does not cleave factor X light chain. No hydrolysis or activation of plasminogen. The alpha-fibrinogenase activity likely contributes to its hemorrhagic activity, which in rat can be completely neutralized in vivo by anti-ammodytagin antibodies, which strongly cross-react with this protein. Has very weak collagen-, ADP- and ristocetin-induced platelet aggregation inhibition activity in vitro. The polypeptide is Zinc metalloproteinase-disintegrin-like protein H3 (Vipera ammodytes ammodytes (Western sand viper)).